Here is an 89-residue protein sequence, read N- to C-terminus: Small ribosomal subunit protein uS15 (89 aa).

This sequence belongs to the universal ribosomal protein uS15 family. Part of the 30S ribosomal subunit. Forms a bridge to the 50S subunit in the 70S ribosome, contacting the 23S rRNA.

Functionally, one of the primary rRNA binding proteins, it binds directly to 16S rRNA where it helps nucleate assembly of the platform of the 30S subunit by binding and bridging several RNA helices of the 16S rRNA. Its function is as follows. Forms an intersubunit bridge (bridge B4) with the 23S rRNA of the 50S subunit in the ribosome. The protein is Small ribosomal subunit protein uS15 of Chlamydia muridarum (strain MoPn / Nigg).